Here is a 317-residue protein sequence, read N- to C-terminus: Ribosomal protein L11 methyltransferase (317 aa).

Residues Thr-158, Gly-179, Asp-201, and Asn-244 each contribute to the S-adenosyl-L-methionine site.

It belongs to the methyltransferase superfamily. PrmA family.

It is found in the cytoplasm. The enzyme catalyses L-lysyl-[protein] + 3 S-adenosyl-L-methionine = N(6),N(6),N(6)-trimethyl-L-lysyl-[protein] + 3 S-adenosyl-L-homocysteine + 3 H(+). Functionally, methylates ribosomal protein L11. This is Ribosomal protein L11 methyltransferase from Streptococcus pyogenes serotype M1.